Here is a 656-residue protein sequence, read N- to C-terminus: Protein teflon (656 aa).

The segment at Leu33–His56 adopts a C2H2-type 1 zinc-finger fold. The interval Asp80 to Asn131 is disordered. Polar residues predominate over residues Ala89 to Ser104. C2H2-type zinc fingers lie at residues Tyr606–His628 and Phe632–His655.

It belongs to the Teflon family.

The protein localises to the nucleus. Its subcellular location is the chromosome. In terms of biological role, specifically required in males for proper segregation of autosomal bivalents at meiosis I. Expression is required in the male germ line prior to spermatocyte stage S4. May have a role as a bridging molecule maintaining adhesion to hold autosome bivalents together via heterochromatic connections. This chain is Protein teflon, found in Drosophila sechellia (Fruit fly).